A 443-amino-acid chain; its full sequence is Xaa-Pro dipeptidase (443 aa).

D246, D257, H339, E384, and E423 together coordinate Mn(2+).

The protein belongs to the peptidase M24B family. Bacterial-type prolidase subfamily. It depends on Mn(2+) as a cofactor.

It catalyses the reaction Xaa-L-Pro dipeptide + H2O = an L-alpha-amino acid + L-proline. Functionally, splits dipeptides with a prolyl residue in the C-terminal position. The chain is Xaa-Pro dipeptidase from Salmonella choleraesuis (strain SC-B67).